The sequence spans 122 residues: RxLR effector protein Avh52 (122 aa).

An N-terminal signal peptide occupies residues 1–21; that stretch reads MRLTSILVLVIAATFHTTGTA. Positions 50–68 match the RxLR-dEER motif; the sequence is RLLRRVEKDKVDYEQDEQR. The segment at 69–86 is TAP1-binding; sequence SFGALKDAVKKLNPVTAV. Positions 87 to 98 are nuclear localization signal (NLS); it reads KKFFKQRAKRKK.

This sequence belongs to the RxLR effector family. In terms of assembly, interacts with host acetyl transferase TAP1.

Its subcellular location is the secreted. The protein localises to the host nucleus. In terms of biological role, effector that suppresses plant defense responses during the early stages of pathogen infection. Suppresses cell death induced by effectors and PAMPs in plant hosts. Interacts with host acetyltransferase TAP1 and causes TAP1 relocation into the nucleus where it acetylates histones H2A and H3 during early infection, thereby promoting susceptibility of host plant to P.sojae. The sequence is that of RxLR effector protein Avh52 from Phytophthora sojae (strain P6497) (Soybean stem and root rot agent).